A 179-amino-acid chain; its full sequence is Cytochrome c-type biogenesis protein CcmE (179 aa).

The Cytoplasmic portion of the chain corresponds to 1–8; it reads MNPRRKSR. Residues 9–29 form a helical; Signal-anchor for type II membrane protein membrane-spanning segment; it reads LTIILFVLLGVTIASSLVLYA. Over 30 to 179 the chain is Periplasmic; that stretch reads LRQNIDLFYT…AVNSVEEGKK (150 aa). Positions 131 and 135 each coordinate heme. Composition is skewed to basic and acidic residues over residues 138 to 148 and 161 to 179; these read PDLSEKMEQVH and ESDR…EGKK. The tract at residues 138–179 is disordered; the sequence is PDLSEKMEQVHKPMGISNQDMQGESDRDRLDKAVNSVEEGKK.

It belongs to the CcmE/CycJ family.

Its subcellular location is the cell inner membrane. Heme chaperone required for the biogenesis of c-type cytochromes. Transiently binds heme delivered by CcmC and transfers the heme to apo-cytochromes in a process facilitated by CcmF and CcmH. This is Cytochrome c-type biogenesis protein CcmE from Mannheimia succiniciproducens (strain KCTC 0769BP / MBEL55E).